We begin with the raw amino-acid sequence, 72 residues long: MSTRFEGSYLGNAARLADDAVLECKICWHRYDPAVGDEVWQILAGTPFAALPAHWRCPQCDGDREQFMVVDD.

The 52-residue stretch at 19 to 70 (DAVLECKICWHRYDPAVGDEVWQILAGTPFAALPAHWRCPQCDGDREQFMVV) folds into the Rubredoxin-like domain. The Fe cation site is built by C24, C27, C57, and C60.

This sequence belongs to the rubredoxin family. Fe(3+) serves as cofactor.

Could be an electron transport intermediate in hydrogen oxidation. In Azotobacter chroococcum mcd 1, this protein is Rubredoxin in uptake hydrogenase operon (hupR).